The sequence spans 190 residues: Putative glutathione-dependent formaldehyde-activating enzyme (190 aa).

One can recognise a CENP-V/GFA domain in the interval 19-165 (FKGGKLYCHC…FRKEGLQTYD (147 aa)). Residues cysteine 26, cysteine 28, cysteine 47, cysteine 49, cysteine 52, cysteine 94, and cysteine 97 each contribute to the Zn(2+) site.

This sequence belongs to the Gfa family. Zn(2+) serves as cofactor.

The catalysed reaction is S-(hydroxymethyl)glutathione = glutathione + formaldehyde. Its pathway is one-carbon metabolism; formaldehyde degradation; formate from formaldehyde (glutathione route): step 1/3. Its function is as follows. Catalyzes the condensation of formaldehyde and glutathione to S-hydroxymethylglutathione. This is Putative glutathione-dependent formaldehyde-activating enzyme from Phaeosphaeria nodorum (strain SN15 / ATCC MYA-4574 / FGSC 10173) (Glume blotch fungus).